Here is a 353-residue protein sequence, read N- to C-terminus: Aromatic amino acid aminotransferase (353 aa).

Position 217 is an N6-(pyridoxal phosphate)lysine (Lys217).

It belongs to the class-II pyridoxal-phosphate-dependent aminotransferase family. In terms of assembly, homodimer. Pyridoxal 5'-phosphate is required as a cofactor.

It carries out the reaction an aromatic L-alpha-amino acid + 2-oxoglutarate = an aromatic oxo-acid + L-glutamate. In terms of biological role, aminotransferase that catalyzes the conversion of aromatic amino acids and 2-oxoglutarate into corresponding aromatic oxo acids and L-glutamate. This Mycobacterium bovis (strain ATCC BAA-935 / AF2122/97) protein is Aromatic amino acid aminotransferase.